We begin with the raw amino-acid sequence, 371 residues long: N-acetyllactosaminide alpha-2,3-sialyltransferase (371 aa).

Gly-255 provides a ligand contact to CMP-N-acetyl-beta-neuraminate. Asp-258 acts as the Proton acceptor in catalysis. CMP-N-acetyl-beta-neuraminate is bound by residues 278 to 282 (APHPR), 299 to 300 (IE), and 322 to 323 (SG). The active-site Proton donor is the His-280.

The protein belongs to the glycosyltransferase 52 family. As to quaternary structure, homodimer.

The protein localises to the cell outer membrane. The catalysed reaction is a beta-D-galactosyl-(1-&gt;4)-N-acetyl-beta-D-glucosaminyl derivative + CMP-N-acetyl-beta-neuraminate = an N-acetyl-alpha-neuraminyl-(2-&gt;3)-beta-D-galactosyl-(1-&gt;4)-N-acetyl-beta-D-glucosaminyl derivative + CMP + H(+). Its pathway is bacterial outer membrane biogenesis; lipooligosaccharide biosynthesis. Catalyzes the transfer of sialic acid from the substrate CMP-N-acetylneuraminate to the terminal galactose residue of the lacto-N-neotetraose branch of surface lipooligosaccharide (LOS), forming an alpha-2,3-sialyl linkage. Thus, functions in the sialylation of LOS, which plays a role in the evasion of the host immune response by protecting N.meningitidis from complement-mediated serum killing and from phagocytic killing by neutrophils. The polypeptide is N-acetyllactosaminide alpha-2,3-sialyltransferase (Neisseria meningitidis serogroup A / serotype 4A (strain DSM 15465 / Z2491)).